A 667-amino-acid chain; its full sequence is E3 ubiquitin-protein ligase Midline-1 (667 aa).

Residues 10–60 form an RING-type zinc finger; it reads CPICLELFEDPLLLPCAHSLCFNCAHRILVSHCATNESVESITAFQCPTCR. Phosphoserine is present on residues Ser-92 and Ser-96. B box-type zinc fingers lie at residues 116-165 and 172-212; these read KVLC…IEPI and GLMC…VAAL. Zn(2+)-binding residues include Cys-119, Cys-122, Cys-134, Cys-137, Cys-142, Cys-145, His-150, His-159, Cys-175, His-178, Cys-198, and His-204. Residues 205–264 are a coiled coil; the sequence is RDHQVAALSERYDKLKQNLESNLTNLIKRNTELETLLAKLIQTCQHVEVNASRQEAKLTE. The COS domain occupies 320 to 379; that stretch reads LKENDHARFLQTAKNITERVSMATASSQVLIPEINLNDTFDTFALDFSREKKLLECLDYL. The Fibronectin type-III domain occupies 381-484; the sequence is APNPPTIREE…EPGKLKTNSQ (104 aa). Over residues 471–485 the composition is skewed to polar residues; the sequence is SRSSEPGKLKTNSQP. The disordered stretch occupies residues 471 to 524; it reads SRSSEPGKLKTNSQPFKLDPKSAHRKLKVSHDNLTVERDESSSKKSHTPERFTS. The region spanning 482–659 is the B30.2/SPRY domain; the sequence is NSQPFKLDPK…IITGLPIPDH (178 aa). Over residues 499 to 520 the composition is skewed to basic and acidic residues; sequence VSHDNLTVERDESSSKKSHTPE. Ser-511 carries the phosphoserine modification.

This sequence belongs to the TRIM/RBCC family. Homodimer or heterodimer with MID2. Interacts with IGBP1. Interacts with TRIM16. Post-translationally, phosphorylated on serine and threonine residues. In the fetus, highest expression found in kidney, followed by brain and lung. Expressed at low levels in fetal liver. In the adult, most abundant in heart, placenta and brain.

The protein resides in the cytoplasm. Its subcellular location is the cytoskeleton. It is found in the spindle. The enzyme catalyses S-ubiquitinyl-[E2 ubiquitin-conjugating enzyme]-L-cysteine + [acceptor protein]-L-lysine = [E2 ubiquitin-conjugating enzyme]-L-cysteine + N(6)-ubiquitinyl-[acceptor protein]-L-lysine.. Functionally, has E3 ubiquitin ligase activity towards IGBP1, promoting its monoubiquitination, which results in deprotection of the catalytic subunit of protein phosphatase PP2A, and its subsequent degradation by polyubiquitination. This Homo sapiens (Human) protein is E3 ubiquitin-protein ligase Midline-1 (MID1).